Here is a 250-residue protein sequence, read N- to C-terminus: Hydroxyethylthiazole kinase (250 aa).

Position 39 (Met39) interacts with substrate. ATP-binding residues include Arg114 and Thr159. Gly186 is a substrate binding site.

It belongs to the Thz kinase family. Mg(2+) is required as a cofactor.

It catalyses the reaction 5-(2-hydroxyethyl)-4-methylthiazole + ATP = 4-methyl-5-(2-phosphooxyethyl)-thiazole + ADP + H(+). It functions in the pathway cofactor biosynthesis; thiamine diphosphate biosynthesis; 4-methyl-5-(2-phosphoethyl)-thiazole from 5-(2-hydroxyethyl)-4-methylthiazole: step 1/1. Catalyzes the phosphorylation of the hydroxyl group of 4-methyl-5-beta-hydroxyethylthiazole (THZ). The protein is Hydroxyethylthiazole kinase of Lactococcus lactis subsp. lactis (strain IL1403) (Streptococcus lactis).